The primary structure comprises 461 residues: Photosystem II CP43 reaction center protein (461 aa).

Positions 1 to 2 (ME) are excised as a propeptide. At Thr3 the chain carries N-acetylthreonine. Residue Thr3 is modified to Phosphothreonine. A run of 5 helical transmembrane segments spans residues 57 to 81 (LFEVAHFVPEKPMYEQGLILLPHLA), 122 to 143 (LIGPETLEETFPFFGYVWKDKN), 166 to 188 (KALYFGGVYDTWAPGGGDVRIIT), 243 to 263 (QPWAWTRRAFVWSGEAYLSYS), and 279 to 300 (WFNNTAYPSEFYGPTGPEASQS). Glu355 contributes to the [CaMn4O5] cluster binding site. Residues 435–459 (RARAAAAGFEKGIDRFNEPTLSLRP) form a helical membrane-spanning segment.

Belongs to the PsbB/PsbC family. PsbC subfamily. In terms of assembly, PSII is composed of 1 copy each of membrane proteins PsbA, PsbB, PsbC, PsbD, PsbE, PsbF, PsbH, PsbI, PsbJ, PsbK, PsbL, PsbM, PsbT, PsbX, PsbY, PsbZ, Psb30/Ycf12, at least 3 peripheral proteins of the oxygen-evolving complex and a large number of cofactors. It forms dimeric complexes. Binds multiple chlorophylls and provides some of the ligands for the Ca-4Mn-5O cluster of the oxygen-evolving complex. It may also provide a ligand for a Cl- that is required for oxygen evolution. PSII binds additional chlorophylls, carotenoids and specific lipids. is required as a cofactor.

The protein localises to the plastid. Its subcellular location is the chloroplast thylakoid membrane. One of the components of the core complex of photosystem II (PSII). It binds chlorophyll and helps catalyze the primary light-induced photochemical processes of PSII. PSII is a light-driven water:plastoquinone oxidoreductase, using light energy to abstract electrons from H(2)O, generating O(2) and a proton gradient subsequently used for ATP formation. This chain is Photosystem II CP43 reaction center protein, found in Oedogonium cardiacum (Filamentous green alga).